Here is a 117-residue protein sequence, read N- to C-terminus: MGWSCIMLFLAATATGVHFQVQLQQPGAELVKPGASVKLSSKASGYTFTSYWMHWVKQRPGRGLEWIGRIDPNSGGTKYNEKFKSKATLTVDKPSSTAYMQLSSLTSEDSAVYYCAR.

The first 19 residues, 1-19 (MGWSCIMLFLAATATGVHF), serve as a signal peptide directing secretion. Residues 20–49 (QVQLQQPGAELVKPGASVKLSSKASGYTFT) are framework-1. The segment at 50-54 (SYWMH) is complementarity-determining-1. The tract at residues 55–68 (WVKQRPGRGLEWIG) is framework-2. Residues 69 to 85 (RIDPNSGGTKYNEKFKS) form a complementarity-determining-2 region. Positions 86-117 (KATLTVDKPSSTAYMQLSSLTSEDSAVYYCAR) are framework-3.

This Mus musculus (Mouse) protein is Ig heavy chain V region 1-62-3 (Ighv1-62-3).